Reading from the N-terminus, the 262-residue chain is 3-methyl-2-oxobutanoate hydroxymethyltransferase (262 aa).

Mg(2+)-binding residues include Asp44 and Asp83. Residues 44–45, Asp83, and Lys113 each bind 3-methyl-2-oxobutanoate; that span reads DS. Residue Glu115 participates in Mg(2+) binding. Glu182 serves as the catalytic Proton acceptor.

The protein belongs to the PanB family. As to quaternary structure, homodecamer; pentamer of dimers. Mg(2+) is required as a cofactor.

It localises to the cytoplasm. It carries out the reaction 3-methyl-2-oxobutanoate + (6R)-5,10-methylene-5,6,7,8-tetrahydrofolate + H2O = 2-dehydropantoate + (6S)-5,6,7,8-tetrahydrofolate. The protein operates within cofactor biosynthesis; (R)-pantothenate biosynthesis; (R)-pantoate from 3-methyl-2-oxobutanoate: step 1/2. Functionally, catalyzes the reversible reaction in which hydroxymethyl group from 5,10-methylenetetrahydrofolate is transferred onto alpha-ketoisovalerate to form ketopantoate. This chain is 3-methyl-2-oxobutanoate hydroxymethyltransferase, found in Picosynechococcus sp. (strain ATCC 27264 / PCC 7002 / PR-6) (Agmenellum quadruplicatum).